Here is a 349-residue protein sequence, read N- to C-terminus: tRNA pseudouridine synthase D (349 aa).

Position 27 (Phe-27) interacts with substrate. Asp-80 (nucleophile) is an active-site residue. Residue Asn-129 participates in substrate binding. The 149-residue stretch at 155 to 303 (GVPNYFGPQR…VEAARRAMLL (149 aa)) folds into the TRUD domain. Residue Phe-329 coordinates substrate.

The protein belongs to the pseudouridine synthase TruD family.

The enzyme catalyses uridine(13) in tRNA = pseudouridine(13) in tRNA. In terms of biological role, responsible for synthesis of pseudouridine from uracil-13 in transfer RNAs. The sequence is that of tRNA pseudouridine synthase D from Cronobacter sakazakii (strain ATCC BAA-894) (Enterobacter sakazakii).